We begin with the raw amino-acid sequence, 218 residues long: Pyridoxine/pyridoxamine 5'-phosphate oxidase (218 aa).

Substrate contacts are provided by residues Arg-14–Tyr-17 and Lys-72. FMN contacts are provided by residues Arg-67–Lys-72, Tyr-82–Thr-83, Arg-88, Lys-89, and Gln-111. Positions 129, 133, and 137 each coordinate substrate. Residues Gln-146–Ser-147 and Trp-191 each bind FMN. Arg-197–His-199 is a binding site for substrate. Arg-201 contributes to the FMN binding site.

Belongs to the pyridoxamine 5'-phosphate oxidase family. As to quaternary structure, homodimer. The cofactor is FMN.

It carries out the reaction pyridoxamine 5'-phosphate + O2 + H2O = pyridoxal 5'-phosphate + H2O2 + NH4(+). The enzyme catalyses pyridoxine 5'-phosphate + O2 = pyridoxal 5'-phosphate + H2O2. Its pathway is cofactor metabolism; pyridoxal 5'-phosphate salvage; pyridoxal 5'-phosphate from pyridoxamine 5'-phosphate: step 1/1. It functions in the pathway cofactor metabolism; pyridoxal 5'-phosphate salvage; pyridoxal 5'-phosphate from pyridoxine 5'-phosphate: step 1/1. Functionally, catalyzes the oxidation of either pyridoxine 5'-phosphate (PNP) or pyridoxamine 5'-phosphate (PMP) into pyridoxal 5'-phosphate (PLP). The protein is Pyridoxine/pyridoxamine 5'-phosphate oxidase of Cronobacter sakazakii (strain ATCC BAA-894) (Enterobacter sakazakii).